Reading from the N-terminus, the 436-residue chain is 3-ketoacyl-CoA thiolase (436 aa).

Cys99 acts as the Acyl-thioester intermediate in catalysis. Active-site proton acceptor residues include His392 and Cys422.

This sequence belongs to the thiolase-like superfamily. Thiolase family. Heterotetramer of two alpha chains (FadJ) and two beta chains (FadI).

It localises to the cytoplasm. The catalysed reaction is an acyl-CoA + acetyl-CoA = a 3-oxoacyl-CoA + CoA. Its pathway is lipid metabolism; fatty acid beta-oxidation. Its function is as follows. Catalyzes the final step of fatty acid oxidation in which acetyl-CoA is released and the CoA ester of a fatty acid two carbons shorter is formed. The polypeptide is 3-ketoacyl-CoA thiolase (Escherichia fergusonii (strain ATCC 35469 / DSM 13698 / CCUG 18766 / IAM 14443 / JCM 21226 / LMG 7866 / NBRC 102419 / NCTC 12128 / CDC 0568-73)).